A 336-amino-acid polypeptide reads, in one-letter code: Cell division protein ZipA (336 aa).

Over 1–2 the chain is Periplasmic; the sequence is ME. A helical membrane pass occupies residues 3 to 23; the sequence is LHILFFILAGLLIAVLIGFSL. The Cytoplasmic portion of the chain corresponds to 24–336; it reads WSARREKSRI…SRQAYLARVS (313 aa).

This sequence belongs to the ZipA family. As to quaternary structure, interacts with FtsZ via their C-terminal domains.

The protein resides in the cell inner membrane. In terms of biological role, essential cell division protein that stabilizes the FtsZ protofilaments by cross-linking them and that serves as a cytoplasmic membrane anchor for the Z ring. Also required for the recruitment to the septal ring of downstream cell division proteins. The chain is Cell division protein ZipA from Actinobacillus pleuropneumoniae serotype 5b (strain L20).